The sequence spans 488 residues: MDLNQISETLSAVAEEEPLTMFLLDKLYAIREKIKQVPFSIVRLCHVYCMLIKYNASNNNCILGRKLIEEMQQFLCGARVDGSEDVSMDMSELCKLYDYCPLLCSALCRAPCVFVNKLFKIVERETRGQSENPLWHALRRYTVTATKLYDIYTTRNFLEHKGQQFFGEAVIYGAKHERVIRHLVAIFYVKREVKETLGLLLDPSSGVFGASLDACFGISFNEDGFLMVKEKALIFEIKFRYKYLRDKEDHFVSELLKNPTEKSFSDFILSHPVPAIEFRERGKIPSSREYLMTYDFQYRPQRKLRTCPTPAILTPHIKQLLCLNETQTSTVIVFDCKSHLSEQKLSVFQKAVFTVNVFVNPKHRYFFQSLLQQYVMTQFYINDHSNPEYIESTEVPSVHIVTALFRRRTEEERSLHLVIDETEYIEEEIPLALIVTPVAPNPEFTCRVITDICNLWENNICKQTSLQVWAQSAVNQYLAACVRKPKTP.

It belongs to the herpesviridae alkaline nuclease family. As to quaternary structure, interacts with major DNA-binding protein; this interaction increases the nuclease processivity of the alkaline exonuclease.

It localises to the host nucleus. Its subcellular location is the host cytoplasm. Its function is as follows. Plays a role in processing non linear or branched viral DNA intermediates in order to promote the production of mature packaged unit-length linear progeny viral DNA molecules. Exhibits endonuclease and exonuclease activities and accepts both double-stranded and single-stranded DNA as substrate. Exonuclease digestion of DNA is in the 5'-&gt; 3' direction and the products are 5'-monophosphate nucleosides. Additionally, forms a recombinase with the major DNA-binding protein, which displays strand exchange activity. In Homo sapiens (Human), this protein is Alkaline nuclease (U70).